Here is a 389-residue protein sequence, read N- to C-terminus: Flap endonuclease 1 (389 aa).

The interval 1–110 (MGIKGLMKLL…GELAKRSDRR (110 aa)) is N-domain. Residue Asp-35 participates in Mg(2+) binding. DNA is bound by residues Arg-48 and Arg-76. Asp-92 serves as a coordination point for Mg(2+). The tract at residues 103–124 (LAKRSDRRQEAQKALEEATEKG) is disordered. An I-domain region spans residues 128–259 (DIDRFNKRLV…KKAYAGIKEH (132 aa)). Glu-164, Glu-166, Asp-185, and Asp-187 together coordinate Mg(2+). Glu-164 contacts DNA. Residues Gly-237 and Asp-239 each coordinate DNA. Asp-239 lines the Mg(2+) pocket. Positions 350–358 (SQKRLDSFF) are interaction with PCNA. The interval 362 to 389 (PSANGAKKRKAPAAKGGKKAATAKKGKK) is disordered. The span at 367–389 (AKKRKAPAAKGGKKAATAKKGKK) shows a compositional bias: basic residues.

It belongs to the XPG/RAD2 endonuclease family. FEN1 subfamily. As to quaternary structure, interacts with PCNA. Three molecules of FEN1 bind to one PCNA trimer with each molecule binding to one PCNA monomer. PCNA stimulates the nuclease activity without altering cleavage specificity. It depends on Mg(2+) as a cofactor. In terms of processing, phosphorylated. Phosphorylation upon DNA damage induces relocalization to the nuclear plasma.

It is found in the nucleus. The protein localises to the nucleolus. The protein resides in the nucleoplasm. It localises to the mitochondrion. Its function is as follows. Structure-specific nuclease with 5'-flap endonuclease and 5'-3' exonuclease activities involved in DNA replication and repair. During DNA replication, cleaves the 5'-overhanging flap structure that is generated by displacement synthesis when DNA polymerase encounters the 5'-end of a downstream Okazaki fragment. It enters the flap from the 5'-end and then tracks to cleave the flap base, leaving a nick for ligation. Also involved in the long patch base excision repair (LP-BER) pathway, by cleaving within the apurinic/apyrimidinic (AP) site-terminated flap. Acts as a genome stabilization factor that prevents flaps from equilibrating into structures that lead to duplications and deletions. Also possesses 5'-3' exonuclease activity on nicked or gapped double-stranded DNA, and exhibits RNase H activity. Also involved in replication and repair of rDNA and in repairing mitochondrial DNA. The polypeptide is Flap endonuclease 1 (Phytophthora infestans (strain T30-4) (Potato late blight agent)).